The following is a 434-amino-acid chain: Xylose isomerase (434 aa).

Catalysis depends on residues histidine 99 and aspartate 102. Residues glutamate 230, glutamate 266, histidine 269, aspartate 294, aspartate 305, aspartate 307, and aspartate 337 each contribute to the Mg(2+) site.

The protein belongs to the xylose isomerase family. As to quaternary structure, homotetramer. Mg(2+) is required as a cofactor.

The protein resides in the cytoplasm. The enzyme catalyses alpha-D-xylose = alpha-D-xylulofuranose. The polypeptide is Xylose isomerase (Dinoroseobacter shibae (strain DSM 16493 / NCIMB 14021 / DFL 12)).